A 70-amino-acid chain; its full sequence is Brevinin-1CG3 (70 aa).

The N-terminal stretch at 1-22 (MFTLKKSLLLLFFLGTINLSLC) is a signal peptide. Residues 23-44 (EQERNAEEERRDDSDKRDVEVE) constitute a propeptide, removed in mature form. A disulfide bridge connects residues Cys64 and Cys70.

The protein belongs to the frog skin active peptide (FSAP) family. Brevinin subfamily. As to expression, expressed by the skin glands.

It is found in the secreted. Functionally, antimicrobial peptide active against a variety of Gram-positive and some Gram-negative bacterial strains. Has antifungal activity against a slime mold isolate. Has hemolytic activity against human erythrocytes. The sequence is that of Brevinin-1CG3 from Amolops chunganensis (Chungan torrent frog).